Reading from the N-terminus, the 338-residue chain is Phosphatidate cytidylyltransferase, mitochondrial (338 aa).

Belongs to the TAM41 family. Requires Mg(2+) as cofactor.

The protein resides in the mitochondrion inner membrane. The catalysed reaction is a 1,2-diacyl-sn-glycero-3-phosphate + CTP + H(+) = a CDP-1,2-diacyl-sn-glycerol + diphosphate. The protein operates within phospholipid metabolism; CDP-diacylglycerol biosynthesis; CDP-diacylglycerol from sn-glycerol 3-phosphate: step 3/3. Its function is as follows. Catalyzes the conversion of phosphatidic acid (PA) to CDP-diacylglycerol (CDP-DAG), an essential intermediate in the synthesis of phosphatidylglycerol, cardiolipin and phosphatidylinositol. This Xenopus laevis (African clawed frog) protein is Phosphatidate cytidylyltransferase, mitochondrial (tamm41).